A 294-amino-acid chain; its full sequence is Probable enoyl-CoA hydratase 2 (294 aa).

(3R)-3-hydroxydecanoyl-CoA is bound by residues 84-85 (HG), K113, 190-195 (DLNPLH), G213, and F243. Residues 165–269 (DRAPDAISKQ…INPTTILFQS (105 aa)) enclose the MaoC-like domain. The short motif at 292–294 (GSL) is the Microbody targeting signal element.

This sequence belongs to the short-chain dehydrogenases/reductases (SDR) family.

The protein resides in the peroxisome. The catalysed reaction is a (3R)-3-hydroxyacyl-CoA = a (2E)-enoyl-CoA + H2O. In Dictyostelium discoideum (Social amoeba), this protein is Probable enoyl-CoA hydratase 2 (mfeB).